The sequence spans 1224 residues: DNA-directed RNA polymerase subunit beta (1224 aa).

The protein belongs to the RNA polymerase beta chain family. The RNAP catalytic core consists of 2 alpha, 1 beta, 1 beta' and 1 omega subunit. When a sigma factor is associated with the core the holoenzyme is formed, which can initiate transcription.

It carries out the reaction RNA(n) + a ribonucleoside 5'-triphosphate = RNA(n+1) + diphosphate. Functionally, DNA-dependent RNA polymerase catalyzes the transcription of DNA into RNA using the four ribonucleoside triphosphates as substrates. In Pelotomaculum thermopropionicum (strain DSM 13744 / JCM 10971 / SI), this protein is DNA-directed RNA polymerase subunit beta.